The chain runs to 73 residues: DNA-binding protein S1FA3 (73 aa).

Residues 47-52 (PPRKKK) carry the Nuclear localization signal motif. The span at 47 to 63 (PPRKKKPVSKKKMKKEK) shows a compositional bias: basic residues. The interval 47–73 (PPRKKKPVSKKKMKKEKMKQGVQVPGE) is disordered.

This sequence belongs to the S1FA transcription factor family.

The protein localises to the nucleus. In terms of biological role, DNA-binding protein that specifically recognizes a negative element (S1F) within the RPS1 promoter. The protein is DNA-binding protein S1FA3 (S1FA3) of Arabidopsis thaliana (Mouse-ear cress).